A 250-amino-acid polypeptide reads, in one-letter code: Cobalt transport protein CbiM (250 aa).

Positions 1-26 (MNKKEKRIVAIAAAFALCFGISPAVN) are cleaved as a signal peptide. A run of 6 helical transmembrane segments spans residues 38–58 (KYCI…YFSI), 68–88 (SITM…LKIP), 102–122 (LGAI…VLIF), 134–154 (TLGA…FGIY), 165–185 (LSGI…VTSI), and 209–229 (FAPT…VIMI).

Belongs to the CbiM family. In terms of assembly, forms an energy-coupling factor (ECF) transporter complex composed of an ATP-binding protein (A component, CbiO), a transmembrane protein (T component, CbiQ) and 2 possible substrate-capture proteins (S components, CbiM and CbiN) of unknown stoichimetry.

It localises to the cell membrane. It participates in cofactor biosynthesis; adenosylcobalamin biosynthesis. In terms of biological role, part of the energy-coupling factor (ECF) transporter complex CbiMNOQ involved in cobalt import. In Lachnoclostridium phytofermentans (strain ATCC 700394 / DSM 18823 / ISDg) (Clostridium phytofermentans), this protein is Cobalt transport protein CbiM.